Here is a 117-residue protein sequence, read N- to C-terminus: Large ribosomal subunit protein bL20 (117 aa).

It belongs to the bacterial ribosomal protein bL20 family.

Its function is as follows. Binds directly to 23S ribosomal RNA and is necessary for the in vitro assembly process of the 50S ribosomal subunit. It is not involved in the protein synthesizing functions of that subunit. The protein is Large ribosomal subunit protein bL20 of Acetivibrio thermocellus (strain ATCC 27405 / DSM 1237 / JCM 9322 / NBRC 103400 / NCIMB 10682 / NRRL B-4536 / VPI 7372) (Clostridium thermocellum).